We begin with the raw amino-acid sequence, 382 residues long: Methenyltetrahydrofolate synthase domain-containing protein (382 aa).

In terms of domain architecture, RRM spans 306 to 382; that stretch reads TTVYLSDIPP…QAKCVSSQKM (77 aa).

In Danio rerio (Zebrafish), this protein is Methenyltetrahydrofolate synthase domain-containing protein (mthfsd).